A 200-amino-acid polypeptide reads, in one-letter code: Phospholipase A2 inhibitor gamma subunit B (200 aa).

A signal peptide spans 1–19; the sequence is MKFLLFCCLFGTFLATGMC. Cystine bridges form between Cys22–Cys46, Cys25–Cys32, Cys39–Cys67, Cys73–Cys94, Cys95–Cys100, Cys120–Cys145, Cys138–Cys165, and Cys171–Cys191. An N-linked (GlcNAc...) asparagine glycan is attached at Asn31.

This sequence belongs to the CNF-like-inhibitor family. As to quaternary structure, heterodimer of subunit A and subunit B. In terms of processing, N-glycosylated. In terms of tissue distribution, expressed by the liver. Not expressed in esophagus, stomach, pancreas, spleen, gall bladder, small intestine, rectum, kidney, trachea, lung, testis and body fat.

The protein localises to the secreted. Inhibits the enzymatic activity of phospholipase A2 (PA2). This chain is Phospholipase A2 inhibitor gamma subunit B, found in Elaphe quadrivirgata (Japanese four-lined ratsnake).